A 189-amino-acid polypeptide reads, in one-letter code: Interferon alpha-1 (189 aa).

An N-terminal signal peptide occupies residues 1-23 (MAPAWSLLLALLLLSCNAICSLG). Intrachain disulfides connect cysteine 24–cysteine 122 and cysteine 52–cysteine 162.

The protein belongs to the alpha/beta interferon family. As to quaternary structure, interacts with CR2.

It localises to the secreted. Produced by macrophages, IFN-alpha have antiviral activities. Interferon stimulates the production of two enzymes: a protein kinase and an oligoadenylate synthetase. This Bos taurus (Bovine) protein is Interferon alpha-1.